The following is a 116-amino-acid chain: Ribosome-binding factor A (116 aa).

It belongs to the RbfA family. Monomer. Binds 30S ribosomal subunits, but not 50S ribosomal subunits or 70S ribosomes.

It is found in the cytoplasm. One of several proteins that assist in the late maturation steps of the functional core of the 30S ribosomal subunit. Associates with free 30S ribosomal subunits (but not with 30S subunits that are part of 70S ribosomes or polysomes). Required for efficient processing of 16S rRNA. May interact with the 5'-terminal helix region of 16S rRNA. In Ureaplasma urealyticum serovar 10 (strain ATCC 33699 / Western), this protein is Ribosome-binding factor A.